We begin with the raw amino-acid sequence, 393 residues long: Methylthioribose kinase (393 aa).

Residues N38, K53, and 107–109 each bind ATP; that span reads EDL. D225 contacts substrate. ATP is bound at residue 242–244; that stretch reads DPE. Substrate is bound at residue R332.

It belongs to the methylthioribose kinase family. As to quaternary structure, homodimer.

It catalyses the reaction 5-(methylsulfanyl)-D-ribose + ATP = 5-(methylsulfanyl)-alpha-D-ribose 1-phosphate + ADP + H(+). It functions in the pathway amino-acid biosynthesis; L-methionine biosynthesis via salvage pathway; S-methyl-5-thio-alpha-D-ribose 1-phosphate from S-methyl-5'-thioadenosine (hydrolase route): step 2/2. Functionally, catalyzes the phosphorylation of methylthioribose into methylthioribose-1-phosphate. The polypeptide is Methylthioribose kinase (Bacillus anthracis (strain A0248)).